Reading from the N-terminus, the 157-residue chain is MRIGHGYDVHRFAEGDFITLGGVRIAHGFGLLAHSDGDVLLHALSDALLGAAALGDIGKHFPDTDPQFKGADSRVLLRHVLKQIHGKGWKVGNVDATIVAQAPKMAPHIDAMRALIAEDLLVELDQVNVKATTTEKLGFTGREEGIAVHAVALLLRA.

D8 and H10 together coordinate a divalent metal cation. 4-CDP-2-C-methyl-D-erythritol 2-phosphate-binding positions include D8–H10 and H34–S35. A divalent metal cation is bound at residue H42. 4-CDP-2-C-methyl-D-erythritol 2-phosphate contacts are provided by residues D56–G58, F61–D65, A100–A106, T132–E135, F139, and R142.

This sequence belongs to the IspF family. As to quaternary structure, homotrimer. It depends on a divalent metal cation as a cofactor.

The enzyme catalyses 4-CDP-2-C-methyl-D-erythritol 2-phosphate = 2-C-methyl-D-erythritol 2,4-cyclic diphosphate + CMP. It participates in isoprenoid biosynthesis; isopentenyl diphosphate biosynthesis via DXP pathway; isopentenyl diphosphate from 1-deoxy-D-xylulose 5-phosphate: step 4/6. In terms of biological role, involved in the biosynthesis of isopentenyl diphosphate (IPP) and dimethylallyl diphosphate (DMAPP), two major building blocks of isoprenoid compounds. Catalyzes the conversion of 4-diphosphocytidyl-2-C-methyl-D-erythritol 2-phosphate (CDP-ME2P) to 2-C-methyl-D-erythritol 2,4-cyclodiphosphate (ME-CPP) with a corresponding release of cytidine 5-monophosphate (CMP). The polypeptide is 2-C-methyl-D-erythritol 2,4-cyclodiphosphate synthase (Pseudomonas syringae pv. tomato (strain ATCC BAA-871 / DC3000)).